The following is a 128-amino-acid chain: MAFSFPDHFRFADSHEYAFADDSLVRIGISEFAVDQLGDIVFVDLPEEGTAIAKGESFGSVESVKAVEDMYAPVSGEIVHRNNSVLASPEELQNDPHGEGWLLIIRPDNPAQLKELMDSETYSKKISA.

The region spanning 24-106 (LVRIGISEFA…HGEGWLLIIR (83 aa)) is the Lipoyl-binding domain. Lys-65 bears the N6-lipoyllysine mark.

The protein belongs to the GcvH family. As to quaternary structure, the glycine cleavage system is composed of four proteins: P, T, L and H. The cofactor is (R)-lipoate.

In terms of biological role, the glycine cleavage system catalyzes the degradation of glycine. The H protein shuttles the methylamine group of glycine from the P protein to the T protein. In Prochlorococcus marinus (strain NATL2A), this protein is Glycine cleavage system H protein.